A 225-amino-acid polypeptide reads, in one-letter code: RNA-binding protein 24-A (225 aa).

One can recognise an RRM domain in the interval 11-88 (TKIFVGGLPY…RKANVNLAYL (78 aa)).

It is found in the nucleus. The protein localises to the cytoplasm. In terms of biological role, multifunctional RNA-binding protein involved in the regulation of pre-mRNA splicing, mRNA stability and mRNA translation important for cell fate decision and differentiation. Plays a major role in pre-mRNA alternative splicing regulation. Mediates preferentially muscle-specific exon inclusion in numerous mRNAs important for striated cardiac and skeletal muscle cell differentiation. Binds to intronic splicing enhancer (ISE) composed of stretches of GU-rich motifs localized in flanking intron of exon that will be included by alternative splicing. Involved in embryonic stem cell (ESC) transition to cardiac cell differentiation by promoting pre-mRNA alternative splicing events of several pluripotency and/or differentiation genes. Plays a role in the regulation of mRNA stability and mRNA translation to which it is bound. Involved in myogenic differentiation by regulating myog levels. Binds to a huge amount of mRNAs. Required for embryonic heart development, sarcomer and M-band formation in striated muscles. This Xenopus laevis (African clawed frog) protein is RNA-binding protein 24-A (rbm24-a).